Here is a 414-residue protein sequence, read N- to C-terminus: Dihydroorotase (414 aa).

The Zn(2+) site is built by His57 and His59. Residues 59–61 and Asn91 contribute to the substrate site; that span reads HLR. Residues Lys135, His164, His204, and Asp272 each contribute to the Zn(2+) site. N6-carboxylysine is present on Lys135. Asp272 is an active-site residue. Substrate is bound by residues His276 and 286-287; that span reads AG.

The protein belongs to the metallo-dependent hydrolases superfamily. DHOase family. Class I DHOase subfamily. The cofactor is Zn(2+).

The catalysed reaction is (S)-dihydroorotate + H2O = N-carbamoyl-L-aspartate + H(+). It participates in pyrimidine metabolism; UMP biosynthesis via de novo pathway; (S)-dihydroorotate from bicarbonate: step 3/3. Functionally, catalyzes the reversible cyclization of carbamoyl aspartate to dihydroorotate. This Pyrococcus furiosus (strain ATCC 43587 / DSM 3638 / JCM 8422 / Vc1) protein is Dihydroorotase.